The chain runs to 168 residues: Photosystem I assembly protein Ycf3 (168 aa).

TPR repeat units follow at residues 29–62 (AFSY…EEDP), 66–99 (SYTL…NANL), and 117–150 (AQSL…APDN).

It belongs to the Ycf3 family.

Its subcellular location is the plastid. It is found in the chloroplast thylakoid membrane. Functionally, essential for the assembly of the photosystem I (PSI) complex. May act as a chaperone-like factor to guide the assembly of the PSI subunits. This is Photosystem I assembly protein Ycf3 from Phaeodactylum tricornutum (strain CCAP 1055/1).